The sequence spans 200 residues: Ras-related protein RABF2a (200 aa).

17–25 (GDVGAGKSS) is a binding site for GTP. The short motif at 39–47 (QESTIGAAF) is the Effector region element. GTP contacts are provided by residues 65-69 (DTAGQ), 123-126 (NKAD), and 153-154 (SA). 2 S-geranylgeranyl cysteine lipidation sites follow: cysteine 198 and cysteine 199.

It belongs to the small GTPase superfamily. Rab family. Interacts with VPS9A. Interacts with EREX (via PX domain). Binds to VPS3. As to expression, high in stem, root, and inflorescence.

It is found in the endosome membrane. The protein resides in the prevacuolar compartment membrane. In terms of biological role, involved in the trafficking of soluble cargo proteins from the prevacuolar compartment to the central vacuole. Involved in vacuolar transport of storage proteins with EREX as effector. Regulates membrane trafficking to protein storage vacuoles (PSVs). This chain is Ras-related protein RABF2a (RABF2A), found in Arabidopsis thaliana (Mouse-ear cress).